We begin with the raw amino-acid sequence, 66 residues long: UPF0337 protein BT9727_0908 (66 aa).

The interval 1–22 (MSENGLKEQITGKVEKTKGQVK) is disordered. The span at 13–22 (KVEKTKGQVK) shows a compositional bias: basic and acidic residues.

Belongs to the UPF0337 (CsbD) family.

The polypeptide is UPF0337 protein BT9727_0908 (Bacillus thuringiensis subsp. konkukian (strain 97-27)).